The following is a 361-amino-acid chain: Beta-hexosaminidase (361 aa).

Substrate contacts are provided by residues aspartate 69, arginine 77, arginine 144, and 174 to 175 (KH). The active-site Proton donor/acceptor is histidine 187. The active-site Nucleophile is the aspartate 258.

The protein belongs to the glycosyl hydrolase 3 family. NagZ subfamily.

The protein localises to the cytoplasm. It carries out the reaction Hydrolysis of terminal non-reducing N-acetyl-D-hexosamine residues in N-acetyl-beta-D-hexosaminides.. The protein operates within cell wall biogenesis; peptidoglycan recycling. Functionally, plays a role in peptidoglycan recycling by cleaving the terminal beta-1,4-linked N-acetylglucosamine (GlcNAc) from peptide-linked peptidoglycan fragments, giving rise to free GlcNAc, anhydro-N-acetylmuramic acid and anhydro-N-acetylmuramic acid-linked peptides. The protein is Beta-hexosaminidase of Neisseria gonorrhoeae (strain NCCP11945).